Here is a 151-residue protein sequence, read N- to C-terminus: Ubiquitin-conjugating enzyme E2 2 (151 aa).

Residues 4-150 (AARRRLMRDF…VRETVEKSWE (147 aa)) form the UBC core domain. The active-site Glycyl thioester intermediate is cysteine 88.

It belongs to the ubiquitin-conjugating enzyme family.

The protein resides in the cytoplasm. Its subcellular location is the nucleus. It catalyses the reaction S-ubiquitinyl-[E1 ubiquitin-activating enzyme]-L-cysteine + [E2 ubiquitin-conjugating enzyme]-L-cysteine = [E1 ubiquitin-activating enzyme]-L-cysteine + S-ubiquitinyl-[E2 ubiquitin-conjugating enzyme]-L-cysteine.. The protein operates within protein modification; protein ubiquitination. Functionally, catalyzes the covalent attachment of ubiquitin to other proteins. Plays a role in transcription regulation by catalyzing the monoubiquitination of histone H2B to form H2BK123ub1. H2BK123ub1 gives a specific tag for epigenetic transcriptional activation and is also a prerequisite for H3K4me and H3K79me formation. Also involved in postreplication repair of UV-damaged DNA, in N-end rule-dependent protein degradation and in sporulation. In Neurospora crassa (strain ATCC 24698 / 74-OR23-1A / CBS 708.71 / DSM 1257 / FGSC 987), this protein is Ubiquitin-conjugating enzyme E2 2 (mus-8).